A 205-amino-acid chain; its full sequence is dITP/XTP pyrophosphatase (205 aa).

Position 11–16 (11–16 (TKNMGK)) interacts with substrate. Mg(2+)-binding residues include glutamate 44 and aspartate 73. Aspartate 73 acts as the Proton acceptor in catalysis. Substrate contacts are provided by residues serine 74, 158-161 (FGYD), lysine 181, and 186-187 (HR).

It belongs to the HAM1 NTPase family. Homodimer. Mg(2+) serves as cofactor.

It carries out the reaction XTP + H2O = XMP + diphosphate + H(+). The enzyme catalyses dITP + H2O = dIMP + diphosphate + H(+). The catalysed reaction is ITP + H2O = IMP + diphosphate + H(+). In terms of biological role, pyrophosphatase that catalyzes the hydrolysis of nucleoside triphosphates to their monophosphate derivatives, with a high preference for the non-canonical purine nucleotides XTP (xanthosine triphosphate), dITP (deoxyinosine triphosphate) and ITP. Seems to function as a house-cleaning enzyme that removes non-canonical purine nucleotides from the nucleotide pool, thus preventing their incorporation into DNA/RNA and avoiding chromosomal lesions. The chain is dITP/XTP pyrophosphatase from Bacillus thuringiensis subsp. konkukian (strain 97-27).